We begin with the raw amino-acid sequence, 71 residues long: NAD(P)H-quinone oxidoreductase subunit O (71 aa).

This sequence belongs to the complex I NdhO subunit family. NDH-1 can be composed of about 15 different subunits; different subcomplexes with different compositions have been identified which probably have different functions.

The protein localises to the cellular thylakoid membrane. It carries out the reaction a plastoquinone + NADH + (n+1) H(+)(in) = a plastoquinol + NAD(+) + n H(+)(out). The catalysed reaction is a plastoquinone + NADPH + (n+1) H(+)(in) = a plastoquinol + NADP(+) + n H(+)(out). In terms of biological role, NDH-1 shuttles electrons from an unknown electron donor, via FMN and iron-sulfur (Fe-S) centers, to quinones in the respiratory and/or the photosynthetic chain. The immediate electron acceptor for the enzyme in this species is believed to be plastoquinone. Couples the redox reaction to proton translocation, and thus conserves the redox energy in a proton gradient. Cyanobacterial NDH-1 also plays a role in inorganic carbon-concentration. In Microcystis aeruginosa (strain NIES-843 / IAM M-2473), this protein is NAD(P)H-quinone oxidoreductase subunit O.